A 290-amino-acid chain; its full sequence is Bifunctional protein FolD (290 aa).

NADP(+)-binding positions include 165–167 (GRS), S190, and I231.

The protein belongs to the tetrahydrofolate dehydrogenase/cyclohydrolase family. As to quaternary structure, homodimer.

The catalysed reaction is (6R)-5,10-methylene-5,6,7,8-tetrahydrofolate + NADP(+) = (6R)-5,10-methenyltetrahydrofolate + NADPH. It catalyses the reaction (6R)-5,10-methenyltetrahydrofolate + H2O = (6R)-10-formyltetrahydrofolate + H(+). It functions in the pathway one-carbon metabolism; tetrahydrofolate interconversion. In terms of biological role, catalyzes the oxidation of 5,10-methylenetetrahydrofolate to 5,10-methenyltetrahydrofolate and then the hydrolysis of 5,10-methenyltetrahydrofolate to 10-formyltetrahydrofolate. This chain is Bifunctional protein FolD, found in Aromatoleum aromaticum (strain DSM 19018 / LMG 30748 / EbN1) (Azoarcus sp. (strain EbN1)).